Here is a 174-residue protein sequence, read N- to C-terminus: NADH-ubiquinone oxidoreductase chain 6 (174 aa).

Transmembrane regions (helical) follow at residues 24–44 (LAMGLMLLIQTIQISMLTGLM), 48–68 (FWFSYILFLIFLGGMLVLFIY), 82–102 (MKLTTISLFIFSMILIINILL), and 143–163 (LMTILLMNYLLITLIAVVKIT).

This sequence belongs to the complex I subunit 6 family.

The protein localises to the mitochondrion membrane. The enzyme catalyses a ubiquinone + NADH + 5 H(+)(in) = a ubiquinol + NAD(+) + 4 H(+)(out). Its function is as follows. Core subunit of the mitochondrial membrane respiratory chain NADH dehydrogenase (Complex I) that is believed to belong to the minimal assembly required for catalysis. Complex I functions in the transfer of electrons from NADH to the respiratory chain. The immediate electron acceptor for the enzyme is believed to be ubiquinone. The polypeptide is NADH-ubiquinone oxidoreductase chain 6 (ND6) (Ceratitis capitata (Mediterranean fruit fly)).